Here is a 3649-residue protein sequence, read N- to C-terminus: N-(5-amino-5-carboxypentanoyl)-L-cysteinyl-D-valine synthase (3649 aa).

A domain 1 (adipate-activating) region spans residues S401–H861. 3 consecutive Carrier domains span residues A783–G860, A1859–A1936, and A2909–L2984. An O-(pantetheine 4'-phosphoryl)serine mark is found at S820, S1896, and S2944. The segment at H1014–L1937 is domain 2 (cysteine-activating). A domain 3 (valine-activating) region spans residues H2079 to A2985. Catalysis depends on S3502, which acts as the For thioesterase activity.

This sequence belongs to the ATP-dependent AMP-binding enzyme family. The cofactor is pantetheine 4'-phosphate.

It carries out the reaction L-2-aminoadipate + L-valine + L-cysteine + 3 ATP + H2O = N-[(5S)-5-amino-5-carboxypentanoyl]-L-cysteinyl-D-valine + 3 AMP + 3 diphosphate + 3 H(+). It functions in the pathway antibiotic biosynthesis; penicillin G biosynthesis; penicillin G from L-alpha-aminoadipate and L-cysteine and L-valine: step 1/3. Functionally, each of the constituent amino acids of the tripeptide acv are activated as aminoacyl-adenylates with peptide bonds formed through the participation of amino acid thioester intermediates. This chain is N-(5-amino-5-carboxypentanoyl)-L-cysteinyl-D-valine synthase (pcbAB), found in Amycolatopsis lactamdurans (Nocardia lactamdurans).